Consider the following 261-residue polypeptide: Cytochrome c oxidase subunit 3 (261 aa).

At 1-15 (MTHQTHAYHMVNPSP) the chain is on the mitochondrial matrix side. A helical transmembrane segment spans residues 16 to 34 (WPLTGALSALLMTSGLIMW). The Mitochondrial intermembrane segment spans residues 35 to 40 (FHFNST). The chain crosses the membrane as a helical span at residues 41-66 (ILLMLGLTTNMLTMYQWWRDVIREST). The Mitochondrial matrix portion of the chain corresponds to 67–72 (FQGHHT). Residues 73-105 (PNVQKGLRYGMILFIISEVLFFTGFFWAFYHSS) form a helical membrane-spanning segment. Residues 106 to 128 (LAPTPELGGCWPPTGIHPLNPLE) are Mitochondrial intermembrane-facing. The chain crosses the membrane as a helical span at residues 129 to 152 (VPLLNTSVLLASGVSITWAHHSLM). Residues 153 to 155 (EGN) are Mitochondrial matrix-facing. The helical transmembrane segment at 156–183 (RNHMLQALFITIALGVYFTLLQASEYYE) threads the bilayer. The Mitochondrial intermembrane portion of the chain corresponds to 184 to 190 (APFTISD). Residues 191 to 223 (GVYGSTFFVATGFHGLHVIIGSTFLIVCFFRQL) form a helical membrane-spanning segment. Residues 224–232 (KFHFTSNHH) lie on the Mitochondrial matrix side of the membrane. Residues 233–256 (FGFEAAAWYWHFVDVVWLFLYVSI) form a helical membrane-spanning segment. Topologically, residues 257-261 (YWWGS) are mitochondrial intermembrane.

The protein belongs to the cytochrome c oxidase subunit 3 family. As to quaternary structure, component of the cytochrome c oxidase (complex IV, CIV), a multisubunit enzyme composed of 14 subunits. The complex is composed of a catalytic core of 3 subunits MT-CO1, MT-CO2 and MT-CO3, encoded in the mitochondrial DNA, and 11 supernumerary subunits COX4I, COX5A, COX5B, COX6A, COX6B, COX6C, COX7A, COX7B, COX7C, COX8 and NDUFA4, which are encoded in the nuclear genome. The complex exists as a monomer or a dimer and forms supercomplexes (SCs) in the inner mitochondrial membrane with NADH-ubiquinone oxidoreductase (complex I, CI) and ubiquinol-cytochrome c oxidoreductase (cytochrome b-c1 complex, complex III, CIII), resulting in different assemblies (supercomplex SCI(1)III(2)IV(1) and megacomplex MCI(2)III(2)IV(2)).

Its subcellular location is the mitochondrion inner membrane. It carries out the reaction 4 Fe(II)-[cytochrome c] + O2 + 8 H(+)(in) = 4 Fe(III)-[cytochrome c] + 2 H2O + 4 H(+)(out). Component of the cytochrome c oxidase, the last enzyme in the mitochondrial electron transport chain which drives oxidative phosphorylation. The respiratory chain contains 3 multisubunit complexes succinate dehydrogenase (complex II, CII), ubiquinol-cytochrome c oxidoreductase (cytochrome b-c1 complex, complex III, CIII) and cytochrome c oxidase (complex IV, CIV), that cooperate to transfer electrons derived from NADH and succinate to molecular oxygen, creating an electrochemical gradient over the inner membrane that drives transmembrane transport and the ATP synthase. Cytochrome c oxidase is the component of the respiratory chain that catalyzes the reduction of oxygen to water. Electrons originating from reduced cytochrome c in the intermembrane space (IMS) are transferred via the dinuclear copper A center (CU(A)) of subunit 2 and heme A of subunit 1 to the active site in subunit 1, a binuclear center (BNC) formed by heme A3 and copper B (CU(B)). The BNC reduces molecular oxygen to 2 water molecules using 4 electrons from cytochrome c in the IMS and 4 protons from the mitochondrial matrix. In Eudorcas thomsonii (Thomson's gazelle), this protein is Cytochrome c oxidase subunit 3 (MT-CO3).